We begin with the raw amino-acid sequence, 551 residues long: Tripartite motif-containing protein 5 (551 aa).

N-acetylalanine is present on Ala-2. The RING-type zinc-finger motif lies at 15-55 (CPICLELLTEPLSLDCGHSFCQACITANHKESRERSCPLCR). A Phosphoserine modification is found at Ser-82. The segment at 87–128 (QKVDRCARHGEKLLLFCQQHGNVICWLCERSEEHRGHRTSLV) adopts a B box-type zinc-finger fold. Zn(2+)-binding residues include Cys-92, His-95, Cys-114, and His-120. Positions 127–221 (LVEEVAQKYR…VQSENDMVLQ (95 aa)) form a coiled coil. Residues 182-195 (FKQLRDILDCEESN) are required for interaction with GABARAP and for autophagy. The 276-residue stretch at 276-551 (PDLKGMLQVF…LPMTLCSPSS (276 aa)) folds into the B30.2/SPRY domain.

The protein belongs to the TRIM/RBCC family. Can form homodimers and homotrimers. In addition to lower-order dimerization, also exhibits a higher-order multimerization and both low- and high-order multimerizations are essential for its restriction activity. Interacts with BTBD1 and BTBD2. Interacts with PSMC4, PSMC5, PSMD7 and HSPA8/HSC70. Interacts (via B30.2/SPRY domain) with HSPA1A/B. Interacts with PSMC2, MAP3K7/TAK1, TAB2 and TAB3. Interacts with SQSTM1. Interacts with TRIM6 and TRIM34. Interacts with ULK1 (phosphorylated form), GABARAP, GABARAPL1, GABARAPL2, MAP1LC3A, MAP1LC3C and BECN1. In terms of processing, degraded in a proteasome-independent fashion in the absence of viral infection but in a proteasome-dependent fashion following exposure to restriction sensitive virus. Autoubiquitinated in a RING finger- and UBE2D2-dependent manner. Monoubiquitinated by TRIM21. Deubiquitinated by Yersinia YopJ. Ubiquitination may not lead to proteasomal degradation.

The protein resides in the cytoplasm. The protein localises to the nucleus. The catalysed reaction is S-ubiquitinyl-[E2 ubiquitin-conjugating enzyme]-L-cysteine + [acceptor protein]-L-lysine = [E2 ubiquitin-conjugating enzyme]-L-cysteine + N(6)-ubiquitinyl-[acceptor protein]-L-lysine.. It participates in protein modification; protein ubiquitination. Capsid-specific restriction factor that prevents infection from non-host-adapted retroviruses. Blocks viral replication early in the life cycle, after viral entry but before reverse transcription. In addition to acting as a capsid-specific restriction factor, also acts as a pattern recognition receptor that activates innate immune signaling in response to the retroviral capsid lattice. Binding to the viral capsid triggers its E3 ubiquitin ligase activity, and in concert with the heterodimeric ubiquitin conjugating enzyme complex UBE2V1-UBE2N (also known as UBC13-UEV1A complex) generates 'Lys-63'-linked polyubiquitin chains, which in turn are catalysts in the autophosphorylation of the MAP3K7/TAK1 complex (includes TAK1, TAB2, and TAB3). Activation of the MAP3K7/TAK1 complex by autophosphorylation results in the induction and expression of NF-kappa-B and MAPK-responsive inflammatory genes, thereby leading to an innate immune response in the infected cell. Plays a role in regulating autophagy through activation of autophagy regulator BECN1 by causing its dissociation from its inhibitors BCL2 and TAB2. The polypeptide is Tripartite motif-containing protein 5 (TRIM5) (Alouatta sara (Bolivian red howler monkey)).